Reading from the N-terminus, the 211-residue chain is Large ribosomal subunit protein bL9 (211 aa).

The interval 180–211 (DDIGAAGMDDDDDDAPAPAQADPSSEESSEED) is disordered.

This sequence belongs to the bacterial ribosomal protein bL9 family.

Its function is as follows. Binds to the 23S rRNA. This Jannaschia sp. (strain CCS1) protein is Large ribosomal subunit protein bL9.